The primary structure comprises 641 residues: Kelch-like protein 22 (641 aa).

The disordered stretch occupies residues 1–25; sequence MAEDLETMKPSQAPQQPSLPQGSSK. Low complexity predominate over residues 10 to 24; sequence PSQAPQQPSLPQGSS. A BTB domain is found at 50 to 117; sequence FDVVLKVEGK…IYTSDLALSV (68 aa). Kelch repeat units lie at residues 299 to 349, 350 to 399, 400 to 446, 448 to 493, 494 to 544, and 545 to 593; these read CVVG…VLNN, FVYL…VLGD, FLYA…ALDG, MYVA…ALQE, KIYL…VLAK, and KIFV…VLTL.

As to quaternary structure, component of the BCR(KLHL22) E3 ubiquitin ligase complex, at least composed of cul3, klhl22 and rbx1.

The protein localises to the cytoplasm. Its subcellular location is the cytosol. It is found in the cytoskeleton. The protein resides in the microtubule organizing center. It localises to the centrosome. The protein localises to the spindle. Its subcellular location is the nucleus. It is found in the lysosome. It participates in protein modification; protein ubiquitination. Functionally, substrate-specific adapter of a BCR (BTB-CUL3-RBX1) E3 ubiquitin ligase complex. The BCR(KLHL22) ubiquitin ligase complex could mediate the monoubiquitination of PLK1 and regulate its activity in spindle assembly checkpoint (SAC) and chromosome segregation. The BCR(KLHL22) ubiquitin ligase complex may also be responsible for the ubiquitin-dependent proteasomal degradation of DEPDC5 and the activation of the TORC1 pathway. This is Kelch-like protein 22 (klhl22) from Xenopus tropicalis (Western clawed frog).